Here is a 107-residue protein sequence, read N- to C-terminus: Metallothionein-1 (107 aa).

This sequence belongs to the metallothionein superfamily. Type 7 family.

The metallothioneins are involved in the cellular sequestration of toxic metal ions. Binds 12 cadmium ions per molecule. The chain is Metallothionein-1 from Tetrahymena thermophila.